The chain runs to 202 residues: 3-isopropylmalate dehydratase small subunit 1 (202 aa).

Belongs to the LeuD family. LeuD type 1 subfamily. As to quaternary structure, heterodimer of LeuC and LeuD.

It catalyses the reaction (2R,3S)-3-isopropylmalate = (2S)-2-isopropylmalate. It participates in amino-acid biosynthesis; L-leucine biosynthesis; L-leucine from 3-methyl-2-oxobutanoate: step 2/4. Functionally, catalyzes the isomerization between 2-isopropylmalate and 3-isopropylmalate, via the formation of 2-isopropylmaleate. The protein is 3-isopropylmalate dehydratase small subunit 1 of Bordetella pertussis (strain Tohama I / ATCC BAA-589 / NCTC 13251).